Here is a 789-residue protein sequence, read N- to C-terminus: Phenylalanine--tRNA ligase beta subunit (789 aa).

Residues 38-151 enclose the tRNA-binding domain; that stretch reads KKHLQSFVVV…NTYNVGESFF (114 aa). The B5 domain maps to 398–474; the sequence is HNDILLNFSP…RLYGYDKILE (77 aa). Mg(2+) is bound by residues Asp452, Asp458, Glu461, and Glu462. In terms of domain architecture, FDX-ACB spans 694-787; sequence LRYQSVKRDF…ISKGFNGILR (94 aa).

Belongs to the phenylalanyl-tRNA synthetase beta subunit family. Type 1 subfamily. In terms of assembly, tetramer of two alpha and two beta subunits. The cofactor is Mg(2+).

It is found in the cytoplasm. It catalyses the reaction tRNA(Phe) + L-phenylalanine + ATP = L-phenylalanyl-tRNA(Phe) + AMP + diphosphate + H(+). In Ehrlichia ruminantium (strain Gardel), this protein is Phenylalanine--tRNA ligase beta subunit.